Here is a 430-residue protein sequence, read N- to C-terminus: Enolase (430 aa).

Residue Q163 coordinates (2R)-2-phosphoglycerate. The active-site Proton donor is E205. Residues D242, E287, and D314 each coordinate Mg(2+). (2R)-2-phosphoglycerate-binding residues include K339, R368, S369, and K390. K339 (proton acceptor) is an active-site residue.

It belongs to the enolase family. Mg(2+) is required as a cofactor.

It localises to the cytoplasm. It is found in the secreted. The protein localises to the cell surface. It catalyses the reaction (2R)-2-phosphoglycerate = phosphoenolpyruvate + H2O. It functions in the pathway carbohydrate degradation; glycolysis; pyruvate from D-glyceraldehyde 3-phosphate: step 4/5. Catalyzes the reversible conversion of 2-phosphoglycerate (2-PG) into phosphoenolpyruvate (PEP). It is essential for the degradation of carbohydrates via glycolysis. The protein is Enolase of Bacillus velezensis (strain DSM 23117 / BGSC 10A6 / LMG 26770 / FZB42) (Bacillus amyloliquefaciens subsp. plantarum).